The chain runs to 179 residues: Large ribosomal subunit protein uL5 (179 aa).

The protein belongs to the universal ribosomal protein uL5 family. Part of the 50S ribosomal subunit; part of the 5S rRNA/L5/L18/L25 subcomplex. Contacts the 5S rRNA and the P site tRNA. Forms a bridge to the 30S subunit in the 70S ribosome.

This is one of the proteins that bind and probably mediate the attachment of the 5S RNA into the large ribosomal subunit, where it forms part of the central protuberance. In the 70S ribosome it contacts protein S13 of the 30S subunit (bridge B1b), connecting the 2 subunits; this bridge is implicated in subunit movement. Contacts the P site tRNA; the 5S rRNA and some of its associated proteins might help stabilize positioning of ribosome-bound tRNAs. The chain is Large ribosomal subunit protein uL5 from Dictyoglomus thermophilum (strain ATCC 35947 / DSM 3960 / H-6-12).